The following is a 151-amino-acid chain: MSDLFAYTDGACSGNPGPGGWGVLMLAREGEAVVKERTLQGGEALTTNNRMELMAAISALEALTRPTEITIVTDSAYVKNGVTTWIHGWKRNGWKTADRKPVKNAELWERLDAAQQRHKVVWRWIKGHAGHAENERADELARAGMAPFKTR.

Residues 1 to 146 (MSDLFAYTDG…ADELARAGMA (146 aa)) enclose the RNase H type-1 domain. 4 residues coordinate Mg(2+): D9, E52, D74, and D138.

It belongs to the RNase H family. In terms of assembly, monomer. Requires Mg(2+) as cofactor.

The protein resides in the cytoplasm. It carries out the reaction Endonucleolytic cleavage to 5'-phosphomonoester.. Endonuclease that specifically degrades the RNA of RNA-DNA hybrids. The sequence is that of Ribonuclease H from Cereibacter sphaeroides (strain ATCC 17025 / ATH 2.4.3) (Rhodobacter sphaeroides).